The chain runs to 699 residues: MFSLGKLVKKDAFFYRYITNVNKDLKIKPITKILIANRGEIACRVMRTAKSKGVKTVAVYSEADKNSLHVSMADESYLIGPAAAKESYLCGNKIIDVAKRSGAQAIHPGYGFLSENSDFADLCEREGIIFIGPPSDAIKAMGSKSASKDIMIKAGVPTIPGYHGEDQSMSVLKSEAAKIGYPVLIKAVMGGGGKGMRIVEREEDLEDGVESSKREATASFGDSRVLVEKYLVHPRHVEIQVFADRHGNCVHLFERDCSVQRRHQKIIEEAPAPHLSEELRKKMGDAAVAAAKAVGYVGAGTVEFILSADNSFFFMEMNTRLQVEHPITEMITKQDLVEWQLKVAESQTLPMEQEQLKIHGHSFEARIYAENPDSDFLPGTGKLAHLSTPTPSDTLRVETGVRQGDEVSVYYDPMIAKLVVWDQDREKALRYLRNALDEYHIIGLNTNISFLKRLSTHPSFMAGEVETGFIPIHRESLMAPQAPMSDDSLALAATSLLLKEITQQKSKEDPNSPWSSLGGFRINHNLKKQVKFNQKDNKVVVNVEFIGGGGAAANGKHNFKVTLDNGNVVEVLDAKLNQNNETISAHVNGRFYNNIKSVIVKDTLTIFNEGQQYQLDIPQDVKPKGADGVLGSLVSPMPGKITKVMVNVGDMVKKGQPILLMEAMKMEHTIRSPIDGKVESLPYNVNEIVEDKKTLAVIV.

A Biotin carboxylation domain is found at 30-475 (ITKILIANRG…ETGFIPIHRE (446 aa)). Residues Lys144, Glu228, and His263 each coordinate ATP. Residues 148-345 (KDIMIKAGVP…LVEWQLKVAE (198 aa)) form the ATP-grasp domain. The active site involves Arg320. A Biotinyl-binding domain is found at 624–699 (KGADGVLGSL…EDKKTLAVIV (76 aa)). Lys665 is subject to N6-biotinyllysine.

As to quaternary structure, probably a dodecamer composed of six biotin-containing alpha subunits and six beta subunits. The cofactor is Mn(2+). Biotin serves as cofactor.

It is found in the mitochondrion matrix. The enzyme catalyses 3-methylbut-2-enoyl-CoA + hydrogencarbonate + ATP = 3-methyl-(2E)-glutaconyl-CoA + ADP + phosphate + H(+). It functions in the pathway amino-acid degradation; L-leucine degradation; (S)-3-hydroxy-3-methylglutaryl-CoA from 3-isovaleryl-CoA: step 2/3. Functionally, biotin-attachment subunit of the 3-methylcrotonyl-CoA carboxylase, an enzyme that catalyzes the conversion of 3-methylcrotonyl-CoA to 3-methylglutaconyl-CoA, a critical step for leucine and isovaleric acid catabolism. This chain is Methylcrotonoyl-CoA carboxylase subunit alpha, mitochondrial (mccA), found in Dictyostelium discoideum (Social amoeba).